Reading from the N-terminus, the 718-residue chain is Putative proline-rich receptor-like protein kinase PERK11 (718 aa).

Positions 1–256 (MDKVQQQADL…GGTSQQSNES (256 aa)) are disordered. At 1–262 (MDKVQQQADL…SNESNYTEKT (262 aa)) the chain is on the extracellular side. Pro residues-rich tracts occupy residues 45–105 (ATSP…PPQS), 115–132 (IPFP…PPPS), and 157–167 (LPSPPSTPFSP). 2 stretches are compositionally biased toward low complexity: residues 168 to 203 (PSQE…LQPL) and 211 to 244 (SNRV…ANSN). Asn231, Asn254, and Asn257 each carry an N-linked (GlcNAc...) asparagine glycan. Residues 263-283 (VIGIGIAGVLVILFIAGVFFV) traverse the membrane as a helical segment. The Cytoplasmic portion of the chain corresponds to 284–718 (RRKQKKGSSS…RAFNTSHRNH (435 aa)). Residues 314–348 (HYRQKPGNGNSSAQNSSPDTNSLGNPKHGRGTPDS) form a disordered region. Over residues 320 to 337 (GNGNSSAQNSSPDTNSLG) the composition is skewed to polar residues. Thr359 carries the post-translational modification Phosphothreonine. Residues 370-649 (FCKSFVVGEG…VRALDTRDDL (280 aa)) enclose the Protein kinase domain. Residues 376 to 384 (VGEGGFGCV) and Lys398 contribute to the ATP site. Residue Tyr443 is modified to Phosphotyrosine. The Proton acceptor role is filled by Asp494. Ser498 and Ser527 each carry phosphoserine. Residues Thr528 and Thr533 each carry the phosphothreonine modification. Tyr541 carries the post-translational modification Phosphotyrosine. A disordered region spans residues 683–718 (SSDLGTNTGYYPSQDYATSHEYESESRAFNTSHRNH). Polar residues-rich tracts occupy residues 685–699 (DLGT…QDYA) and 709–718 (RAFNTSHRNH).

It belongs to the protein kinase superfamily. Ser/Thr protein kinase family. In terms of tissue distribution, mostly expressed in flower buds.

The protein localises to the cell membrane. The enzyme catalyses L-seryl-[protein] + ATP = O-phospho-L-seryl-[protein] + ADP + H(+). It catalyses the reaction L-threonyl-[protein] + ATP = O-phospho-L-threonyl-[protein] + ADP + H(+). In Arabidopsis thaliana (Mouse-ear cress), this protein is Putative proline-rich receptor-like protein kinase PERK11 (PERK11).